A 368-amino-acid chain; its full sequence is Cytoskeleton protein RodZ (368 aa).

Topologically, residues 1–111 (MNTEASQDQT…LGKKHKKRDG (111 aa)) are cytoplasmic. The HTH cro/C1-type domain maps to 19-79 (LRQARESLGL…KLVHLPEDEL (61 aa)). Positions 30–49 (QQTVAERLCLKVSTIRDIEE) form a DNA-binding region, H-T-H motif. A helical; Signal-anchor for type II membrane protein membrane pass occupies residues 112–132 (WLMSFTWLIVLVVLGLTGAWW). The Periplasmic portion of the chain corresponds to 133–368 (WQNHQAQQAE…RVARLTVGVE (236 aa)). A disordered region spans residues 151–243 (SAQLSQNGGQ…STEPVDTANT (93 aa)). Over residues 193-221 (STSAVTNSATTSSATTSSVPTTSSVPKTT) the composition is skewed to low complexity. The segment covering 229-243 (VPKTNSTEPVDTANT) has biased composition (polar residues).

It belongs to the RodZ family.

Its subcellular location is the cell inner membrane. Functionally, cytoskeletal protein that is involved in cell-shape control through regulation of the length of the long axis. The polypeptide is Cytoskeleton protein RodZ (Yersinia pseudotuberculosis serotype O:3 (strain YPIII)).